A 377-amino-acid chain; its full sequence is Putative holocytochrome-c synthase (377 aa).

Disordered stretches follow at residues 1-29 (MTSS…SNEA) and 111-136 (QNSE…KPAG). Positions 7–22 (TTDHPRTGKCPIDHSK) are enriched in basic and acidic residues. HRM repeat units lie at residues 114 to 119 (EATPAV) and 124 to 129 (TCPMSN).

It belongs to the cytochrome c-type heme lyase family.

It localises to the mitochondrion inner membrane. The protein localises to the mitochondrion intermembrane space. It carries out the reaction holo-[cytochrome c] = apo-[cytochrome c] + heme b. Its function is as follows. Lyase that catalyzes the covalent linking of the heme group to the cytochrome C apoprotein to produce the mature functional cytochrome. The polypeptide is Putative holocytochrome-c synthase (Schizosaccharomyces pombe (strain 972 / ATCC 24843) (Fission yeast)).